Reading from the N-terminus, the 474-residue chain is 1-aminocyclopropane-1-carboxylate synthase 4 (474 aa).

Glutamate 47 and tyrosine 85 together coordinate substrate. Lysine 273 carries the N6-(pyridoxal phosphate)lysine modification.

This sequence belongs to the class-I pyridoxal-phosphate-dependent aminotransferase family. Homodimer and heterodimer. In vivo, the relevance of heterodimerization with other ACS enzymes is however unsure. Interacts with XBAT32. Interacts (via its C-terminal region) with ETO1 and EOL1. Pyridoxal 5'-phosphate serves as cofactor. In terms of processing, ubiquitinated by XBAT32. Ubiquitination probably leads to its subsequent degradation, thus controlling ethylene production. In terms of tissue distribution, expressed in roots, leaves and flowers.

It catalyses the reaction S-adenosyl-L-methionine = 1-aminocyclopropane-1-carboxylate + S-methyl-5'-thioadenosine + H(+). It functions in the pathway alkene biosynthesis; ethylene biosynthesis via S-adenosyl-L-methionine; ethylene from S-adenosyl-L-methionine: step 1/2. In terms of biological role, 1-aminocyclopropane-1-carboxylate synthase (ACS) enzymes catalyze the conversion of S-adenosyl-L-methionine (SAM) into 1-aminocyclopropane-1-carboxylate (ACC), a direct precursor of ethylene. The polypeptide is 1-aminocyclopropane-1-carboxylate synthase 4 (ACS4) (Arabidopsis thaliana (Mouse-ear cress)).